We begin with the raw amino-acid sequence, 152 residues long: Calmodulin (152 aa).

Ala2 bears the N-acetylalanine mark. 4 EF-hand domains span residues 10–45 (EQIA…LGQN), 46–81 (PTEA…KMQD), 83–118 (DTEE…LGEK), and 119–152 (LTNE…IVRN). Ca(2+)-binding residues include Asp23, Asp25, Asp27, Ser29, Glu34, Asp59, Asp61, Asn63, Asn65, Glu70, Asp96, Asp98, Asn100, Tyr102, Glu107, Asp132, Asp134, Asp136, Gln138, and Glu143.

This sequence belongs to the calmodulin family. In terms of assembly, interacts with cmbB, numA/nucleomorphin, pgkA/phosphoglycerate kinase, and thyB/thymidine kinase in the presence of Ca(2+). Interacts with dwwA in the absence of Ca(2+). Post-translationally, the N-terminus is blocked. Trimethylation of Lys-118 observed in other calmodulins is absent here.

The protein resides in the contractile vacuole. Functionally, calmodulin mediates the control of a large number of enzymes, ion channels and other proteins by Ca(2+). Among the enzymes to be stimulated by the calmodulin-Ca(2+) complex are a number of protein kinases and phosphatases. In Dictyostelium discoideum (Social amoeba), this protein is Calmodulin (calA).